A 285-amino-acid polypeptide reads, in one-letter code: Bifunctional protein FolD (285 aa).

NADP(+) contacts are provided by residues 166–168 (GRS), S191, and I232.

Belongs to the tetrahydrofolate dehydrogenase/cyclohydrolase family. In terms of assembly, homodimer.

The catalysed reaction is (6R)-5,10-methylene-5,6,7,8-tetrahydrofolate + NADP(+) = (6R)-5,10-methenyltetrahydrofolate + NADPH. The enzyme catalyses (6R)-5,10-methenyltetrahydrofolate + H2O = (6R)-10-formyltetrahydrofolate + H(+). The protein operates within one-carbon metabolism; tetrahydrofolate interconversion. Catalyzes the oxidation of 5,10-methylenetetrahydrofolate to 5,10-methenyltetrahydrofolate and then the hydrolysis of 5,10-methenyltetrahydrofolate to 10-formyltetrahydrofolate. This Rickettsia typhi (strain ATCC VR-144 / Wilmington) protein is Bifunctional protein FolD.